The primary structure comprises 727 residues: NADH-ubiquinone oxidoreductase 75 kDa subunit, mitochondrial (727 aa).

A mitochondrion-targeting transit peptide spans 1–23 (MLRIPVRKALVVLSKSPKGCVRT). The 2Fe-2S ferredoxin-type domain maps to 30-108 (NLIEVFVDGQ…GWNILTNSKK (79 aa)). [2Fe-2S] cluster-binding residues include C64, C75, and C78. K84 carries the N6-acetyllysine modification. C92 contributes to the [2Fe-2S] cluster binding site. The 4Fe-4S His(Cys)3-ligated-type domain occupies 108–147 (KSKKAREGVMEFLLANHPLDCPICDQGGECDLQDQSMMFG). [4Fe-4S] cluster contacts are provided by H124, C128, C131, C137, C176, C179, C182, and C226. Residues 245-301 (TRKTESIDVMDAVGSNIVVSTRTGEVMRILPRMHEDINEEWISDKTRFAYDGLKRQR) enclose the 4Fe-4S Mo/W bis-MGD-type domain. N6-acetyllysine is present on residues K467, K499, and K709.

This sequence belongs to the complex I 75 kDa subunit family. In terms of assembly, core subunit of respiratory chain NADH dehydrogenase (Complex I) which is composed of 45 different subunits. This is the largest subunit of complex I and it is a component of the iron-sulfur (IP) fragment of the enzyme. Complex I associates with ubiquinol-cytochrome reductase complex (Complex III) to form supercomplexes. Interacts with MDM2 and AKAP1. It depends on [2Fe-2S] cluster as a cofactor. The cofactor is [4Fe-4S] cluster.

The protein resides in the mitochondrion inner membrane. It carries out the reaction a ubiquinone + NADH + 5 H(+)(in) = a ubiquinol + NAD(+) + 4 H(+)(out). Its function is as follows. Core subunit of the mitochondrial membrane respiratory chain NADH dehydrogenase (Complex I) which catalyzes electron transfer from NADH through the respiratory chain, using ubiquinone as an electron acceptor. Essential for catalysing the entry and efficient transfer of electrons within complex I. Plays a key role in the assembly and stability of complex I and participates in the association of complex I with ubiquinol-cytochrome reductase complex (Complex III) to form supercomplexes. The sequence is that of NADH-ubiquinone oxidoreductase 75 kDa subunit, mitochondrial (NDUFS1) from Pan troglodytes (Chimpanzee).